A 189-amino-acid chain; its full sequence is Nucleoside triphosphate pyrophosphatase (189 aa).

Asp70 (proton acceptor) is an active-site residue.

Belongs to the Maf family. A divalent metal cation is required as a cofactor.

Its subcellular location is the cytoplasm. It carries out the reaction a ribonucleoside 5'-triphosphate + H2O = a ribonucleoside 5'-phosphate + diphosphate + H(+). The catalysed reaction is a 2'-deoxyribonucleoside 5'-triphosphate + H2O = a 2'-deoxyribonucleoside 5'-phosphate + diphosphate + H(+). Its function is as follows. Nucleoside triphosphate pyrophosphatase. May have a dual role in cell division arrest and in preventing the incorporation of modified nucleotides into cellular nucleic acids. This chain is Nucleoside triphosphate pyrophosphatase, found in Xylella fastidiosa (strain M23).